The chain runs to 100 residues: Acylphosphatase (100 aa).

The Acylphosphatase-like domain occupies 14–100 (RLSAWVHGHV…RGDLTGFEER (87 aa)). Active-site residues include R29 and N47.

The protein belongs to the acylphosphatase family.

It catalyses the reaction an acyl phosphate + H2O = a carboxylate + phosphate + H(+). This chain is Acylphosphatase (acyP), found in Nocardia farcinica (strain IFM 10152).